Consider the following 343-residue polypeptide: Phenylalanine--tRNA ligase alpha subunit (343 aa).

Glu268 contacts Mg(2+).

It belongs to the class-II aminoacyl-tRNA synthetase family. Phe-tRNA synthetase alpha subunit type 1 subfamily. In terms of assembly, tetramer of two alpha and two beta subunits. It depends on Mg(2+) as a cofactor.

It localises to the cytoplasm. It catalyses the reaction tRNA(Phe) + L-phenylalanine + ATP = L-phenylalanyl-tRNA(Phe) + AMP + diphosphate + H(+). The chain is Phenylalanine--tRNA ligase alpha subunit from Cupriavidus taiwanensis (strain DSM 17343 / BCRC 17206 / CCUG 44338 / CIP 107171 / LMG 19424 / R1) (Ralstonia taiwanensis (strain LMG 19424)).